Here is a 308-residue protein sequence, read N- to C-terminus: 1,4-dihydroxy-2-naphthoate octaprenyltransferase (308 aa).

Helical transmembrane passes span 22-42 (TLPL…WANP), 47-67 (GLVM…SNFA), 101-121 (WGLI…IGIA), 129-149 (FAFA…TVGV), 153-173 (GYMG…GVGG), 186-206 (IILP…INNL), 235-255 (ILLS…AISW), 256-276 (TNYL…FVYC), and 286-306 (ILAQ…LGLL).

This sequence belongs to the MenA family. Type 1 subfamily.

The protein localises to the cell inner membrane. The enzyme catalyses an all-trans-polyprenyl diphosphate + 1,4-dihydroxy-2-naphthoate + H(+) = a 2-demethylmenaquinol + CO2 + diphosphate. It participates in quinol/quinone metabolism; menaquinone biosynthesis; menaquinol from 1,4-dihydroxy-2-naphthoate: step 1/2. Conversion of 1,4-dihydroxy-2-naphthoate (DHNA) to demethylmenaquinone (DMK). The chain is 1,4-dihydroxy-2-naphthoate octaprenyltransferase from Haemophilus influenzae (strain ATCC 51907 / DSM 11121 / KW20 / Rd).